The primary structure comprises 485 residues: P2X purinoceptor 2 (485 aa).

At 1–43 the chain is on the cytoplasmic side; it reads MAAAQPRLPAGAAMVRRLARGCWSAFWDYETPKVIVVRNRRLG. 6 cysteine pairs are disulfide-bonded: Cys22-Cys443, Cys126-Cys177, Cys137-Cys160, Cys143-Cys171, Cys227-Cys237, and Cys271-Cys280. A helical transmembrane segment spans residues 44–64; sequence FVHRMVQLLILLYFVWYVFIV. Residues 65-339 are Extracellular-facing; it reads QKSYQDSETG…IVHGQAGKFS (275 aa). ATP-binding residues include Lys82 and Lys84. Asn195 carries N-linked (GlcNAc...) asparagine glycosylation. Thr197 serves as a coordination point for ATP. N-linked (GlcNAc...) asparagine glycosylation occurs at Asn252. Residues Ser297, Asn301, and Arg303 each contribute to the ATP site. The N-linked (GlcNAc...) asparagine glycan is linked to Asn311. Lys321 is an ATP binding site. The tract at residues 322–335 is pore-forming motif; it reads AYGIRIDVIVHGQA. A helical membrane pass occupies residues 340-360; that stretch reads LIPTIINLATALTSIGVGSFL. Over 361-485 the chain is Cytoplasmic; it reads CDWILLTFMN…STDPKGLAQL (125 aa). The interval 406-485 is disordered; it reads PPPSHYSQDQ…STDPKGLAQL (80 aa). The span at 420–436 shows a compositional bias: low complexity; sequence PSGEGPALGEGAELPLA. The segment covering 469 to 478 has biased composition (polar residues); that stretch reads PSQQDSTSTD.

Belongs to the P2X receptor family. As to quaternary structure, homotrimer and heterotrimer; functional P2XRs are organized as homomeric and heteromeric trimers. Homotrimer. Forms heterotrimer with P2XR1. Forms heterotrimer with P2XR3. Forms heterotrimer with P2XR6.

It is found in the cell membrane. The enzyme catalyses Ca(2+)(in) = Ca(2+)(out). It carries out the reaction K(+)(in) = K(+)(out). It catalyses the reaction Na(+)(in) = Na(+)(out). Fast activation by external ATP. Exhibits slow desensitization during prolonged ATP activation. Not sensitive to the ATP agonist:alpha/beta-methylene-ATP. In terms of biological role, ATP-gated nonselective transmembrane cation channel permeable to potassium, sodium and calcium. Activation by extracellular ATP induces a variety of cellular responses, such as excitatory postsynaptic responses in sensory neurons, neuromuscular junctions (NMJ) formation, hearing, perception of taste and peristalsis. In the inner ear, regulates sound transduction and auditory neurotransmission, outer hair cell electromotility, inner ear gap junctions, and K(+) recycling. Mediates synaptic transmission between neurons and from neurons to smooth muscle. This is P2X purinoceptor 2 (P2rx2) from Mus musculus (Mouse).